The primary structure comprises 481 residues: Pyruvate kinase (481 aa).

Substrate is bound at residue arginine 36. K(+) contacts are provided by asparagine 38, serine 40, and aspartate 70. 38–41 (NFSH) serves as a coordination point for ATP. Residues arginine 77 and lysine 160 each contribute to the ATP site. Residue glutamate 225 coordinates Mg(2+). Substrate is bound by residues glycine 251, aspartate 252, and threonine 284. Aspartate 252 serves as a coordination point for Mg(2+).

This sequence belongs to the pyruvate kinase family. Homotetramer. Mg(2+) serves as cofactor. It depends on K(+) as a cofactor.

The enzyme catalyses pyruvate + ATP = phosphoenolpyruvate + ADP + H(+). It participates in carbohydrate degradation; glycolysis; pyruvate from D-glyceraldehyde 3-phosphate: step 5/5. Its activity is regulated as follows. Allosterically activated by AMP and by several sugar phosphates. Belongs to type II PK. The chain is Pyruvate kinase (pykA) from Buchnera aphidicola subsp. Schizaphis graminum (strain Sg).